Reading from the N-terminus, the 361-residue chain is MRVDQFDFDLPDASIALRPAHPRDAARLLVVRPGRLSPAALDDRFIRDLPELLAAGDVLVVNDTRVIPARLDGFRARGEALARIEATLHKREGGDLWRAFLRPAKKLRAGETILFSSGDAKLAARVVEKGEDGEVLLGFELSGAELDLALERVGRMPLPPYISSKRGADESDAADYQTLFADRPGAVAAPTASLHFTPALLAALVAKGVQIERVTLHVGAGTFLPVKAEDTDDHRMHAEWGEVSAETAGALNAARRAGRRVVAAGTTSLRILESAAGPDGAVAAFSGDTSIFITPGYSFKAVDLLLTNFHLPRSTLFMLVCAFSGLQTMRDAYNHAIAAGYRFYSYGDACLLYPAAPRGAA.

The protein belongs to the QueA family. In terms of assembly, monomer.

It localises to the cytoplasm. It catalyses the reaction 7-aminomethyl-7-carbaguanosine(34) in tRNA + S-adenosyl-L-methionine = epoxyqueuosine(34) in tRNA + adenine + L-methionine + 2 H(+). Its pathway is tRNA modification; tRNA-queuosine biosynthesis. Its function is as follows. Transfers and isomerizes the ribose moiety from AdoMet to the 7-aminomethyl group of 7-deazaguanine (preQ1-tRNA) to give epoxyqueuosine (oQ-tRNA). This chain is S-adenosylmethionine:tRNA ribosyltransferase-isomerase, found in Methylocella silvestris (strain DSM 15510 / CIP 108128 / LMG 27833 / NCIMB 13906 / BL2).